A 295-amino-acid chain; its full sequence is G1/S-specific cyclin-D1 (295 aa).

Residues 28–152 form the Cyclin N-terminal domain; it reads LRAMLKAEET…VLVNKLKWNL (125 aa). The disordered stretch occupies residues 264–295; the sequence is QQNLDPKAAEEEEEEEEVDLACTPTDVRDVNI. K270 is covalently cross-linked (Glycyl lysine isopeptide (Lys-Gly) (interchain with G-Cter in ubiquitin)). A compositionally biased stretch (acidic residues) spans 273–282; it reads EEEEEEEEVD. Position 286 is a phosphothreonine (T286).

Belongs to the cyclin family. Cyclin D subfamily. In terms of assembly, interacts with either CDK4 or CDK6 protein kinase to form a serine/threonine kinase holoenzyme complex. The cyclin subunit imparts substrate specificity to the complex. Component of the ternary complex CCND1/CDK4/CDKN1B required for nuclear translocation and modulation of CDK4-mediated kinase activity. Interacts directly with CDKN1B. Can form similar complexes with either CDKN1A or CDKN2A. Interacts with UHRF2; the interaction ubiquitinates CCND1 and appears to occur independently of phosphorylation. Interacts with USP2. Interacts (via cyclin N-terminal domain) with INSM1 (via N-terminal region); the interaction competes with the binding of CCND1 to CDK4 during cell cycle progression and inhibits CDK4 activity. Interacts with CDK4; the interaction is prevented with the binding of CCND1 to INSM1 during cell cycle progression. Post-translationally, phosphorylation at Thr-286 by MAP kinases is required for ubiquitination and degradation by the DCX(AMBRA1) complex. It also plays an essential role for recognition by the FBXO31 component of SCF (SKP1-cullin-F-box) protein ligase complex following DNA damage. Ubiquitinated at Lys-270 by the DCX(AMBRA1) complex during the transition from G1 to S cell phase, leading to its degradation: ubiquitination is dependent on Thr-286 phosphorylation. The DCX(AMBRA1) complex represents the major regulator of CCND1 stability during the G1/S transition. Also ubiquitinated by the SCF(FBXO4) and Cul7-RING(FBXW8) ubiquitin-protein ligase complexes. Following DNA damage it is ubiquitinated by the SCF(FBXO31) protein ligase complex. SCF(FBXO31) ubiquitination is dependent on Thr-286 phosphorylation. Ubiquitinated also by UHRF2 apparently in a phosphorylation-independent manner. Ubiquitination leads to its degradation and G1 arrest. Deubiquitinated by USP2; leading to its stabilization.

The protein localises to the nucleus. It localises to the cytoplasm. The protein resides in the nucleus membrane. In terms of biological role, regulatory component of the cyclin D1-CDK4 (DC) complex that phosphorylates and inhibits members of the retinoblastoma (RB) protein family including RB1 and regulates the cell-cycle during G(1)/S transition. Phosphorylation of RB1 allows dissociation of the transcription factor E2F from the RB/E2F complex and the subsequent transcription of E2F target genes which are responsible for the progression through the G(1) phase. Hypophosphorylates RB1 in early G(1) phase. Cyclin D-CDK4 complexes are major integrators of various mitogenenic and antimitogenic signals. Also a substrate for SMAD3, phosphorylating SMAD3 in a cell-cycle-dependent manner and repressing its transcriptional activity. Component of the ternary complex, cyclin D1/CDK4/CDKN1B, required for nuclear translocation and activity of the cyclin D-CDK4 complex. Exhibits transcriptional corepressor activity with INSM1 on the NEUROD1 and INS promoters in a cell cycle-independent manner. This is G1/S-specific cyclin-D1 (CCND1) from Bos taurus (Bovine).